The chain runs to 336 residues: Type II methyltransferase M.PvuII (336 aa).

Tandem repeats lie at residues 11-113 (SNDM…IYNF) and 181-293 (SDRM…WISF). The disordered stretch occupies residues 196 to 215 (TPKTRPSGHDIGKSFSKDNG). Residues 202 to 211 (SGHDIGKSFS) show a composition bias toward basic and acidic residues.

The protein belongs to the N(4)/N(6)-methyltransferase family. N(4) subfamily. In terms of assembly, monomer.

It carries out the reaction a 2'-deoxycytidine in DNA + S-adenosyl-L-methionine = an N(4)-methyl-2'-deoxycytidine in DNA + S-adenosyl-L-homocysteine + H(+). Functionally, a beta subtype methylase, recognizes the double-stranded sequence 5'-CAGCTG-3', methylates C-4 on both strands, and protects the DNA from cleavage by the PvuII endonuclease. The sequence is that of Type II methyltransferase M.PvuII from Proteus hauseri.